Reading from the N-terminus, the 344-residue chain is Outer membrane protein B (344 aa).

The first 30 residues, 1–30 (MNSKMLKHLRLATLSFSMFFGIVSSPAVYA), serve as a signal peptide directing secretion.

The protein belongs to the chlamydial OMP family.

The protein resides in the cell outer membrane. This is Outer membrane protein B (ompB) from Chlamydia pneumoniae (Chlamydophila pneumoniae).